Here is a 383-residue protein sequence, read N- to C-terminus: Histidine decarboxylase (383 aa).

His120 contributes to the substrate binding site. Lys233 carries the N6-(pyridoxal phosphate)lysine modification.

This sequence belongs to the group II decarboxylase family. As to quaternary structure, homotetramer. Requires pyridoxal 5'-phosphate as cofactor.

It carries out the reaction L-histidine + H(+) = histamine + CO2. This is Histidine decarboxylase from Acinetobacter baumannii (strain AB307-0294).